A 169-amino-acid polypeptide reads, in one-letter code: Lipoprotein signal peptidase (169 aa).

The next 2 helical transmembrane spans lie at 59-79 and 84-104; these read PTVL…YVIW and TTLF…NMID. Active-site residues include Asp-113 and Asp-139. Residues 132–152 traverse the membrane as a helical segment; the sequence is WPIFNIADSAITIGACMLMIF.

Belongs to the peptidase A8 family.

The protein localises to the cell inner membrane. The enzyme catalyses Release of signal peptides from bacterial membrane prolipoproteins. Hydrolyzes -Xaa-Yaa-Zaa-|-(S,diacylglyceryl)Cys-, in which Xaa is hydrophobic (preferably Leu), and Yaa (Ala or Ser) and Zaa (Gly or Ala) have small, neutral side chains.. The protein operates within protein modification; lipoprotein biosynthesis (signal peptide cleavage). This protein specifically catalyzes the removal of signal peptides from prolipoproteins. This is Lipoprotein signal peptidase from Pelodictyon phaeoclathratiforme (strain DSM 5477 / BU-1).